We begin with the raw amino-acid sequence, 490 residues long: Bifunctional pantoate ligase/cytidylate kinase (490 aa).

ATP is bound at residue 1 to 8 (MGGLHQGH). The tract at residues 1 to 253 (MGGLHQGHAR…CGETRLIDHV (253 aa)) is pantoate--beta-alanine ligase. His8 functions as the Proton donor in the catalytic mechanism. Gln35 contacts (R)-pantoate. Gln35 serves as a coordination point for beta-alanine. 124-127 (GEKD) is an ATP binding site. Gln130 is a (R)-pantoate binding site. ATP contacts are provided by residues Val153 and 161–164 (ASSR). A cytidylate kinase region spans residues 254-490 (FIMTRSPIVA…AKEIWPTPQG (237 aa)).

This sequence in the N-terminal section; belongs to the pantothenate synthetase family. It in the C-terminal section; belongs to the cytidylate kinase family. Type 1 subfamily.

The protein localises to the cytoplasm. The enzyme catalyses (R)-pantoate + beta-alanine + ATP = (R)-pantothenate + AMP + diphosphate + H(+). It catalyses the reaction CMP + ATP = CDP + ADP. It carries out the reaction dCMP + ATP = dCDP + ADP. The protein operates within cofactor biosynthesis; (R)-pantothenate biosynthesis; (R)-pantothenate from (R)-pantoate and beta-alanine: step 1/1. Its function is as follows. Catalyzes the condensation of pantoate with beta-alanine in an ATP-dependent reaction via a pantoyl-adenylate intermediate. Functionally, catalyzes the transfer of a phosphate group from ATP to either CMP or dCMP to form CDP or dCDP and ADP, respectively. In Synechococcus sp. (strain WH7803), this protein is Bifunctional pantoate ligase/cytidylate kinase.